Consider the following 476-residue polypeptide: MSESSHVGLWNRCLEIIRDNVPESTYKTWFVPIVPLKYEDKTLIVQVPSQFFYEFLEDKFVDLLRKTLYKVIGDGTKLMYNVLVDKSSGATVNQESTTRSTAIPQSGLPRVDERKAPGLLRAPAVQDLDPHLNPNYNFETFIEGYSNKLSRSVAEAVAENPAKTVFNPLFLHGASGVGKTHLANAIGTRIKELYPDKRVLYVSAHLFQVQYTDSVRNNTTNDFINFYQTIDVLIIDDIQEFAGVTKTQNTFFHIFNHLHQNGKQLILTSDRAPVLLQGMEERLLTRFKWGMVAELEKPTVELRKNILRNKIHRDGLQFPSEVIDYIAENVNESVRDLEGIVISIMAHSTIYNKEIDLDLAQRIVRKVVRCETKAVTIDDIINVVCKHFDLESSAIHTKSRKREVVQARQVAMYLAKTHTDFSTSKIGKFIGNKDHATVLHACKTVKGQCEVDKGFRSDLENIETLLKKRNVSNGER.

Residues M1–S87 are domain I, interacts with DnaA modulators. Residues S87–P130 are domain II. The segment at H131–S348 is domain III, AAA+ region. G176, G178, K179, and T180 together coordinate ATP. The domain IV, binds dsDNA stretch occupies residues T349–R476.

It belongs to the DnaA family. In terms of assembly, oligomerizes as a right-handed, spiral filament on DNA at oriC.

Its subcellular location is the cytoplasm. Its function is as follows. Plays an essential role in the initiation and regulation of chromosomal replication. ATP-DnaA binds to the origin of replication (oriC) to initiate formation of the DNA replication initiation complex once per cell cycle. Binds the DnaA box (a 9 base pair repeat at the origin) and separates the double-stranded (ds)DNA. Forms a right-handed helical filament on oriC DNA; dsDNA binds to the exterior of the filament while single-stranded (ss)DNA is stabiized in the filament's interior. The ATP-DnaA-oriC complex binds and stabilizes one strand of the AT-rich DNA unwinding element (DUE), permitting loading of DNA polymerase. After initiation quickly degrades to an ADP-DnaA complex that is not apt for DNA replication. Binds acidic phospholipids. The polypeptide is Chromosomal replication initiator protein DnaA (Bacteroides fragilis (strain YCH46)).